The primary structure comprises 544 residues: CTP synthase (544 aa).

The interval 1 to 265 is amidoligase domain; it reads MTKFIFVTGG…DNIITEQLQL (265 aa). Ser13 contributes to the CTP binding site. Position 13 (Ser13) interacts with UTP. Residues 14–19 and Asp71 contribute to the ATP site; that span reads SLGKGI. Mg(2+)-binding residues include Asp71 and Glu139. CTP contacts are provided by residues 146-148, 186-191, and Lys222; these read DIE and KTKPTQ. Residues 186–191 and Lys222 contribute to the UTP site; that span reads KTKPTQ. The region spanning 290–544 is the Glutamine amidotransferase type-1 domain; that stretch reads KIAMVGKYVD…VKAALNNKKA (255 aa). Gly353 provides a ligand contact to L-glutamine. Cys380 (nucleophile; for glutamine hydrolysis) is an active-site residue. Residues 381–384, Glu404, and Arg471 each bind L-glutamine; that span reads LGMQ. Residues His517 and Glu519 contribute to the active site.

The protein belongs to the CTP synthase family. Homotetramer.

It catalyses the reaction UTP + L-glutamine + ATP + H2O = CTP + L-glutamate + ADP + phosphate + 2 H(+). The enzyme catalyses L-glutamine + H2O = L-glutamate + NH4(+). It carries out the reaction UTP + NH4(+) + ATP = CTP + ADP + phosphate + 2 H(+). It functions in the pathway pyrimidine metabolism; CTP biosynthesis via de novo pathway; CTP from UDP: step 2/2. With respect to regulation, allosterically activated by GTP, when glutamine is the substrate; GTP has no effect on the reaction when ammonia is the substrate. The allosteric effector GTP functions by stabilizing the protein conformation that binds the tetrahedral intermediate(s) formed during glutamine hydrolysis. Inhibited by the product CTP, via allosteric rather than competitive inhibition. Catalyzes the ATP-dependent amination of UTP to CTP with either L-glutamine or ammonia as the source of nitrogen. Regulates intracellular CTP levels through interactions with the four ribonucleotide triphosphates. The chain is CTP synthase from Neisseria meningitidis serogroup B (strain ATCC BAA-335 / MC58).